We begin with the raw amino-acid sequence, 65 residues long: Large ribosomal subunit protein bL35 (65 aa).

The protein belongs to the bacterial ribosomal protein bL35 family.

This Desulforapulum autotrophicum (strain ATCC 43914 / DSM 3382 / VKM B-1955 / HRM2) (Desulfobacterium autotrophicum) protein is Large ribosomal subunit protein bL35.